A 254-amino-acid polypeptide reads, in one-letter code: Alcohol dehydrogenase (254 aa).

NAD(+) is bound at residue 10–33 (FVAGLGGIGLDTSRELVKRDLKNL). Substrate is bound at residue Ser-138. Residue Tyr-151 is the Proton acceptor of the active site.

Belongs to the short-chain dehydrogenases/reductases (SDR) family. Homodimer.

It carries out the reaction a primary alcohol + NAD(+) = an aldehyde + NADH + H(+). It catalyses the reaction a secondary alcohol + NAD(+) = a ketone + NADH + H(+). This Drosophila guanche (Fruit fly) protein is Alcohol dehydrogenase (Adh).